Reading from the N-terminus, the 1016-residue chain is C2 domain-containing protein 5 (1016 aa).

In terms of domain architecture, C2 spans 1 to 109 (MPGKLKVKIV…EAATVISGWF (109 aa)). Ca(2+)-binding residues include D19, D26, D76, D78, S81, and D84. S197 bears the Phosphoserine; by PKB/AKT2 mark. A phosphoserine mark is found at S200 and S260. A disordered region spans residues 265 to 330 (LKEIPFNEDP…SGSAGKEGGP (66 aa)). Polar residues predominate over residues 274–289 (PNPNTHSSGPSTPLKN). Over residues 290–318 (QTYSFSPSKSYSRQSSSSDTDLSLTPKTG) the composition is skewed to low complexity. Residues S293, S295, S304, S305, and S306 each carry the phosphoserine modification. T317 bears the Phosphothreonine mark. Residues 319-328 (MGSGSAGKEG) are compositionally biased toward gly residues. A Phosphoserine modification is found at S323. T601 carries the post-translational modification Phosphothreonine. A disordered region spans residues 636–668 (VSEEMIGSPIPEPRQRSRLLRSQSESSDEVTEL). 5 positions are modified to phosphoserine: S643, S657, S659, S661, and S662. Phosphothreonine is present on T666. Phosphoserine occurs at positions 671, 817, and 869.

Ca(2+) serves as cofactor. In terms of processing, phosphorylated on Ser-197 by active myristoylated kinase AKT2; insulin-stimulated phosphorylation by AKT2 regulates SLC2A4/GLUT4 translocation into the plasma membrane. As to expression, expressed in liver, muscle and fat.

Its subcellular location is the cytoplasmic vesicle membrane. It localises to the cytoplasm. The protein resides in the cell cortex. The protein localises to the cell membrane. It is found in the cell projection. Its subcellular location is the ruffle. Its function is as follows. Required for insulin-stimulated glucose transport and glucose transporter SLC2A4/GLUT4 translocation from intracellular glucose storage vesicle (GSV) to the plasma membrane (PM) in adipocytes. Binds phospholipid membranes in a calcium-dependent manner and is necessary for the optimal membrane fusion between SLC2A4/GLUT4 GSV and the PM. The polypeptide is C2 domain-containing protein 5 (C2cd5) (Mus musculus (Mouse)).